The following is a 1168-amino-acid chain: Probable serine/threonine protein kinase IRE (1168 aa).

2 disordered regions span residues 1–165 and 377–444; these read MSTT…GVES and EKQN…KIQP. The span at 16–25 shows a compositional bias: low complexity; sequence PTTISTPTST. Composition is skewed to basic and acidic residues over residues 39 to 54 and 107 to 130; these read RHSD…KTDE and QDDK…DARA. Polar residues-rich tracts occupy residues 146–163 and 401–414; these read QWSQ…NPGV and TARS…NFRM. Residues 488–507 form a C2H2-type; atypical zinc finger; sequence CRICEVEIPVVHVEEHSRIC. Disordered stretches follow at residues 546–566, 602–622, and 717–744; these read PRAV…DLDE, GTKD…PRNS, and SSNA…LNPR. Residues 754 to 1043 form the Protein kinase domain; that stretch reads FEIIKPISRG…AGEVKQHHFF (290 aa). Residues 760–768 and Lys783 contribute to the ATP site; that span reads ISRGAFGRV. Asp877 serves as the catalytic Proton acceptor. An AGC-kinase C-terminal domain is found at 1044–1144; the sequence is KDINWDTLAR…KNLSQLASIN (101 aa).

Belongs to the protein kinase superfamily. AGC Ser/Thr protein kinase family. As to expression, highly expressed in roots, elongating root hair cells and pollen grains.

It carries out the reaction L-seryl-[protein] + ATP = O-phospho-L-seryl-[protein] + ADP + H(+). The catalysed reaction is L-threonyl-[protein] + ATP = O-phospho-L-threonyl-[protein] + ADP + H(+). Modulates root tip growth. May play a common role in the tip growth of plant cells. This chain is Probable serine/threonine protein kinase IRE, found in Arabidopsis thaliana (Mouse-ear cress).